The sequence spans 350 residues: tRNA pseudouridine synthase D (350 aa).

A substrate-binding site is contributed by F27. The active-site Nucleophile is the D80. N129 contacts substrate. The TRUD domain maps to 155 to 303 (GVPNYFGVQR…VDTTRRAINL (149 aa)). F329 serves as a coordination point for substrate.

It belongs to the pseudouridine synthase TruD family.

It catalyses the reaction uridine(13) in tRNA = pseudouridine(13) in tRNA. In terms of biological role, responsible for synthesis of pseudouridine from uracil-13 in transfer RNAs. The chain is tRNA pseudouridine synthase D from Proteus mirabilis (strain HI4320).